The sequence spans 334 residues: Glycerol-3-phosphate dehydrogenase [NAD(P)+] (334 aa).

Positions 14 and 108 each coordinate NADPH. Positions 108, 140, and 142 each coordinate sn-glycerol 3-phosphate. Alanine 144 contacts NADPH. Sn-glycerol 3-phosphate is bound by residues lysine 195, aspartate 248, serine 258, arginine 259, and asparagine 260. Lysine 195 acts as the Proton acceptor in catalysis. Arginine 259 lines the NADPH pocket. Glutamate 285 is an NADPH binding site.

Belongs to the NAD-dependent glycerol-3-phosphate dehydrogenase family.

Its subcellular location is the cytoplasm. It catalyses the reaction sn-glycerol 3-phosphate + NAD(+) = dihydroxyacetone phosphate + NADH + H(+). The enzyme catalyses sn-glycerol 3-phosphate + NADP(+) = dihydroxyacetone phosphate + NADPH + H(+). It functions in the pathway membrane lipid metabolism; glycerophospholipid metabolism. Its function is as follows. Catalyzes the reduction of the glycolytic intermediate dihydroxyacetone phosphate (DHAP) to sn-glycerol 3-phosphate (G3P), the key precursor for phospholipid synthesis. The polypeptide is Glycerol-3-phosphate dehydrogenase [NAD(P)+] (Mesoplasma florum (strain ATCC 33453 / NBRC 100688 / NCTC 11704 / L1) (Acholeplasma florum)).